Consider the following 566-residue polypeptide: Arginine--tRNA ligase (566 aa).

Residues 121–131 (ANPNGPFHIGH) carry the 'HIGH' region motif.

Belongs to the class-I aminoacyl-tRNA synthetase family.

The protein localises to the cytoplasm. The enzyme catalyses tRNA(Arg) + L-arginine + ATP = L-arginyl-tRNA(Arg) + AMP + diphosphate. The sequence is that of Arginine--tRNA ligase from Methanococcus maripaludis (strain C5 / ATCC BAA-1333).